The chain runs to 1069 residues: DNA annealing helicase and endonuclease ZRANB3 (1069 aa).

One can recognise a Helicase ATP-binding domain in the interval valine 46–glutamine 208. The tract at residues valine 46–glutamate 481 is DNA annealing helicase activity. Aspartate 59–threonine 66 contributes to the ATP binding site. Positions aspartate 157–histidine 160 match the DEAH box motif. The Helicase C-terminal domain occupies alanine 325 to glutamate 485. The PIP-box motif lies at glutamine 518–phenylalanine 525. The RanBP2-type zinc-finger motif lies at proline 617 to arginine 646. The segment at alanine 648 to glycine 720 is disordered. Composition is skewed to basic and acidic residues over residues histidine 652 to glutamate 661 and glutamate 677 to leucine 707. An HNH domain is found at proline 1001–glutamine 1041. Residues proline 1001–lysine 1069 form an endonuclease activity region. Residues arginine 1064 to lysine 1068 carry the APIM motif motif.

Belongs to the SNF2/RAD54 helicase family. Interacts (via PIP-box and RanBP2-type zinc finger) with PCNA (when PCNA is polyubiquitinated via 'Lys-63'-linked polyubiquitin).

Its subcellular location is the nucleus. It is found in the chromosome. Its function is as follows. DNA annealing helicase and endonuclease required to maintain genome stability at stalled or collapsed replication forks by facilitating fork restart and limiting inappropriate recombination that could occur during template switching events. Recruited to the sites of stalled DNA replication by polyubiquitinated PCNA and acts as a structure-specific endonuclease that cleaves the replication fork D-loop intermediate, generating an accessible 3'-OH group in the template of the leading strand, which is amenable to extension by DNA polymerase. In addition to endonuclease activity, also catalyzes the fork regression via annealing helicase activity in order to prevent disintegration of the replication fork and the formation of double-strand breaks. In Mus musculus (Mouse), this protein is DNA annealing helicase and endonuclease ZRANB3 (Zranb3).